A 1029-amino-acid polypeptide reads, in one-letter code: Collagen, type I, alpha 1b (1029 aa).

The segment at 1-990 (QMSYVDHSKS…KAPDPFRGGH (990 aa)) is disordered. Pro residues predominate over residues 13–33 (PPQPGPMGPMGPRGPPGPPGS). A compositionally biased stretch (low complexity) spans 34-57 (SGPQGFTGPPGEPGEPGASGAMGS). Positions 67-81 (NGDDGEPGKPGRPGE) are enriched in basic and acidic residues. Low complexity-rich tracts occupy residues 82–91 (RGAAGPQGAR), 120–129 (VPGVMGARGR), and 136–147 (SGARGNDGNTGP). Over residues 163–182 (PGGAGAKGETGPAGGRGNEG) the composition is skewed to gly residues. Low complexity-rich tracts occupy residues 199 to 223 (AGPA…AGLA), 233 to 267 (AQGA…PGPA), and 299 to 309 (ERGAPGARGFP). The segment covering 310-322 (GADGGAGGKGAPG) has biased composition (gly residues). 2 stretches are compositionally biased toward low complexity: residues 323-351 (ERGA…PGSK) and 429-465 (VGAP…QGAT). Over residues 466–477 (GETGKGLGGPTG) the composition is skewed to gly residues. Low complexity predominate over residues 478-497 (PRGAPGPAGNDGAKGEPGAA). Composition is skewed to gly residues over residues 498–507 (GAPGGLGAPG) and 531–540 (GGKGGDGAPG). 2 stretches are compositionally biased toward low complexity: residues 571–580 (VAGPTGPRGA) and 593–620 (AGFA…KGDA). Composition is skewed to gly residues over residues 621-630 (GAPGPGGPVG) and 645-654 (GARGGAGPPG). Composition is skewed to low complexity over residues 655 to 665 (ATGFPGPAGRV), 694 to 722 (ETGA…PGXD), 731 to 743 (PQGL…LPGQ), 830 to 839 (APGAVGPSGK), and 855 to 869 (SGPA…PAGA). The segment covering 870–884 (KGDRGEAGEAGDRGG) has biased composition (basic and acidic residues). Residues 906-934 (PAGASGPAGPRGPAGSNGAPGKDGMNGLP) are compositionally biased toward low complexity. Pro residues predominate over residues 952–967 (AGPPGPPGPAGPPGPP). One can recognise a Fibrillar collagen NC1 domain in the interval 999–1029 (TQKLPLLDLAPMDVGAPDQEFGVEVGPVCFL).

The protein belongs to the fibrillar collagen family.

The protein localises to the secreted. The protein resides in the extracellular space. It is found in the extracellular matrix. The sequence is that of Collagen, type I, alpha 1b from Epinephelus aeneus (White grouper).